Reading from the N-terminus, the 358-residue chain is MNELDSLVATARAAFAEAKTPAELENAKAQFLGKSGRITELMKGMAALSVDEKKSRGAAINVAKQAIEAALTERRQQLADEELSLQLRAEALDVSLPGRRRIPGGLHPVSRTLERIEEIFSSMGFDVADGPEIESDWHSFTSLNNPPNHPARSMQDTFYVDLNGDDGIPYNLRPHTSPMQVRYAHQHIKKYAAEFAAAAADATGTVKAPEIRVIAPGRTYRVDSDATHSPMFHQCEGLWLGENVSFKDLKVVFTDFCRTFFESDDLVLRFRPSFFPFTEPSAEIDIQFASGPLAGRWLEVAGSGQVHPNVVRNMGLDPERYIGFAFGMGPDRLTMLRYGVNDLRLFFDGDLRFLSQFQ.

Residue glutamate 279 coordinates Mg(2+).

Belongs to the class-II aminoacyl-tRNA synthetase family. Phe-tRNA synthetase alpha subunit type 1 subfamily. As to quaternary structure, tetramer of two alpha and two beta subunits. Mg(2+) serves as cofactor.

It localises to the cytoplasm. The catalysed reaction is tRNA(Phe) + L-phenylalanine + ATP = L-phenylalanyl-tRNA(Phe) + AMP + diphosphate + H(+). The sequence is that of Phenylalanine--tRNA ligase alpha subunit from Variovorax paradoxus (strain S110).